We begin with the raw amino-acid sequence, 407 residues long: Chorismate synthase (407 aa).

NADP(+)-binding residues include Arg40 and Arg46. Residues 138–140 (RAS) and 259–260 (QA) contribute to the FMN site. Over residues 275–284 (RRGSRAHDEM) the composition is skewed to basic and acidic residues. The segment at 275-308 (RRGSRAHDEMYPGTDGVVRSTNRAGGLEGGMTNG) is disordered. FMN-binding positions include Gly303, 318 to 322 (KPIST), and Arg344.

Belongs to the chorismate synthase family. In terms of assembly, homotetramer. Requires FMNH2 as cofactor.

The enzyme catalyses 5-O-(1-carboxyvinyl)-3-phosphoshikimate = chorismate + phosphate. It functions in the pathway metabolic intermediate biosynthesis; chorismate biosynthesis; chorismate from D-erythrose 4-phosphate and phosphoenolpyruvate: step 7/7. In terms of biological role, catalyzes the anti-1,4-elimination of the C-3 phosphate and the C-6 proR hydrogen from 5-enolpyruvylshikimate-3-phosphate (EPSP) to yield chorismate, which is the branch point compound that serves as the starting substrate for the three terminal pathways of aromatic amino acid biosynthesis. This reaction introduces a second double bond into the aromatic ring system. The sequence is that of Chorismate synthase from Mycobacterium ulcerans (strain Agy99).